Consider the following 494-residue polypeptide: Cysteine--tRNA ligase (494 aa).

Cys29 lines the Zn(2+) pocket. A 'HIGH' region motif is present at residues 31-41; sequence VTVYDHCHIGH. Zn(2+) contacts are provided by Cys209, His234, and Glu238. The short motif at 266–270 is the 'KMSKS' region element; that stretch reads KMSKS. An ATP-binding site is contributed by Lys269.

The protein belongs to the class-I aminoacyl-tRNA synthetase family. Monomer. It depends on Zn(2+) as a cofactor.

Its subcellular location is the cytoplasm. The enzyme catalyses tRNA(Cys) + L-cysteine + ATP = L-cysteinyl-tRNA(Cys) + AMP + diphosphate. This is Cysteine--tRNA ligase from Geotalea uraniireducens (strain Rf4) (Geobacter uraniireducens).